The sequence spans 513 residues: Maturase K (513 aa).

This sequence belongs to the intron maturase 2 family. MatK subfamily.

The protein resides in the plastid. It localises to the chloroplast. Usually encoded in the trnK tRNA gene intron. Probably assists in splicing its own and other chloroplast group II introns. The sequence is that of Maturase K from Zea mays (Maize).